The chain runs to 445 residues: Lateral flagellar hook-associated protein 2 (445 aa).

Positions 388–423 (SGAFKSRKEALQANLDRLSDKQTTLERKYDMSYKRY) form a coiled coil.

Belongs to the FliD family. In terms of assembly, homopentamer.

The protein resides in the secreted. It localises to the bacterial flagellum. Required for the morphogenesis and for the elongation of the flagellar filament by facilitating polymerization of the flagellin monomers at the tip of growing filament. Forms a capping structure, which prevents flagellin subunits (transported through the central channel of the flagellum) from leaking out without polymerization at the distal end. Essential for swarming motility. The sequence is that of Lateral flagellar hook-associated protein 2 (fliDL) from Vibrio parahaemolyticus serotype O3:K6 (strain RIMD 2210633).